The chain runs to 426 residues: Serine protease HTRA2, mitochondrial (426 aa).

A mitochondrion-targeting transit peptide spans 1–30 (MALRGSHRLDDFIRRCSALTLFHSQAPSRR). A disordered region spans residues 30–59 (RVSHCGRDRRQQQDPPGQGRQEQQESGGGH). Positions 31–78 (VSHCGRDRRQQQDPPGQGRQEQQESGGGHWSRFGWRSLIRFFVPFSLG) are excised as a propeptide. A compositionally biased stretch (low complexity) spans 42-54 (QDPPGQGRQEQQE). The chain crosses the membrane as a helical span at residues 68 to 86 (LIRFFVPFSLGAVASSLVI). The IAP-binding motif lies at 79-82 (AVAS). Residues 143 to 306 (SNGSGFIIEQ…IPIDYVKVFL (164 aa)) are serine protease. Active-site charge relay system residues include histidine 161, aspartate 193, and serine 270. The 86-residue stretch at 329-414 (MGITMLTLTP…HLDIVILRGV (86 aa)) folds into the PDZ domain.

Belongs to the peptidase S1C family. As to quaternary structure, interacts with th/DIAP1 (via BIR 2 domain).

The protein resides in the mitochondrion intermembrane space. It is found in the mitochondrion membrane. It carries out the reaction Cleavage of non-polar aliphatic amino-acids at the P1 position, with a preference for Val, Ile and Met. At the P2 and P3 positions, Arg is selected most strongly with a secondary preference for other hydrophilic residues.. In terms of biological role, serine protease that shows proteolytic activity against a non-specific substrate beta-casein. Promotes or induces cell death either by direct binding to and inhibition of BIRC proteins (also called inhibitor of apoptosis proteins, IAPs), leading to an increase in caspase activity, or by a BIRC inhibition-independent, caspase-independent and serine protease activity-dependent mechanism. Can antagonize antiapoptotic activity of th/Diap1 by directly inducing the degradation of th/Diap1. The sequence is that of Serine protease HTRA2, mitochondrial from Drosophila ananassae (Fruit fly).